The chain runs to 263 residues: N-acetylgalactosamine permease IID component (263 aa).

Residues 3-263 form the PTS EIID domain; that stretch reads SEISKKDITR…SIVCSAFGIL (261 aa). Helical transmembrane passes span 61–81, 98–118, 131–151, 178–198, 215–235, and 243–263; these read LEFINTHPNLVGFLMGLLISM, LFGPIAGIGDAIFWFTLLPIM, LLGPILFFAVYLLIFFLRVGW, TILGITVIGGLIASYVHINVV, FFDKVFPNILPMAYTLLMYYF, and PVLLIGVTFVLSIVCSAFGIL.

Its subcellular location is the cell inner membrane. Functionally, the phosphoenolpyruvate-dependent sugar phosphotransferase system (PTS), a major carbohydrate active -transport system, catalyzes the phosphorylation of incoming sugar substrates concomitant with their translocation across the cell membrane. This system is involved in N-acetylgalactosamine transport. This Escherichia coli (strain K12) protein is N-acetylgalactosamine permease IID component (agaD).